A 1038-amino-acid polypeptide reads, in one-letter code: Probable ubiquitin conjugation factor E4 (1038 aa).

Disordered stretches follow at residues 430 to 459 (ANDA…ASGQ) and 1010 to 1038 (SHQS…MLID). Residues 446 to 459 (SKEATSSSSNASGQ) are compositionally biased toward low complexity. Positions 940–1014 (EIPDEFLDPI…DEFVKSHQSK (75 aa)) constitute a U-box domain. Residues 1017–1028 (TSGEDSSNKERI) show a composition bias toward basic and acidic residues. The segment covering 1029–1038 (QTTNSDMLID) has biased composition (polar residues).

Belongs to the ubiquitin conjugation factor E4 family.

It is found in the cytoplasm. The protein resides in the nucleus. It carries out the reaction S-ubiquitinyl-[E2 ubiquitin-conjugating enzyme]-L-cysteine + [acceptor protein]-L-lysine = [E2 ubiquitin-conjugating enzyme]-L-cysteine + N(6)-ubiquitinyl-[acceptor protein]-L-lysine.. The protein operates within protein modification; protein ubiquitination. Functionally, ubiquitin-protein ligase that may function as an E3 ligase in conjunction with specific E1 and E2 ligases. May also function as an E4 ligase mediating the assembly of polyubiquitin chain assembly on substrates monoubiquitinated by another E3 ubiquitin ligase. The polypeptide is Probable ubiquitin conjugation factor E4 (PUB1) (Arabidopsis thaliana (Mouse-ear cress)).